A 95-amino-acid polypeptide reads, in one-letter code: Mitochondrial import inner membrane translocase subunit Tim13 (95 aa).

An N-acetylmethionine modification is found at methionine 1. Serine 7 is modified (phosphoserine). The short motif at 46–69 (CFRKCIGKPGGSLDNSEQKCIAMC) is the Twin CX3C motif element. 2 cysteine pairs are disulfide-bonded: cysteine 46/cysteine 69 and cysteine 50/cysteine 65. Residue lysine 53 is modified to N6-succinyllysine.

The protein belongs to the small Tim family. As to quaternary structure, heterohexamer; composed of 3 copies of TIMM8 (TIMM8A or TIMM8B) and 3 copies of TIMM13, named soluble 70 kDa complex. Associates with the TIM22 complex, whose core is composed of TIMM22. In terms of tissue distribution, present at high level in liver and brain, and at lower level in muscle and heart. In CNS sections, it is predominantly present in the soma and the dendritic portion of the Purkinje cells of the cerebellum, but not in the glial cells. Scattered expression also is also detected in the brain stem, olfactory bulb, substantia nigra, hippocampus and striatum (at protein level).

The protein localises to the mitochondrion inner membrane. In terms of biological role, mitochondrial intermembrane chaperone that participates in the import and insertion of some multi-pass transmembrane proteins into the mitochondrial inner membrane. Also required for the transfer of beta-barrel precursors from the TOM complex to the sorting and assembly machinery (SAM complex) of the outer membrane. Acts as a chaperone-like protein that protects the hydrophobic precursors from aggregation and guide them through the mitochondrial intermembrane space. The TIMM8-TIMM13 complex mediates the import of proteins such as TIMM23, SLC25A12/ARALAR1 and SLC25A13/ARALAR2, while the predominant TIMM9-TIMM10 70 kDa complex mediates the import of much more proteins. In Mus musculus (Mouse), this protein is Mitochondrial import inner membrane translocase subunit Tim13 (Timm13).